We begin with the raw amino-acid sequence, 246 residues long: UPF0758 protein SSU98_1084 (246 aa).

In terms of domain architecture, MPN spans 103-225 (RILGSEKLGR…YYSFREESDV (123 aa)). The Zn(2+) site is built by His174, His176, and Asp187. Residues 174-187 (HNHPSGSVQPSRND) carry the JAMM motif motif.

Belongs to the UPF0758 family.

In Streptococcus suis (strain 98HAH33), this protein is UPF0758 protein SSU98_1084.